Here is a 184-residue protein sequence, read N- to C-terminus: MIGLFKVKEKQREQAQNATRGGASVKKQSAGELRLHKDISELNLPSSCSISFPNGKDDLMNFEVSIKPDDGYYHNGTFVFTFQVSPVYPHEAPKVKCKTKVYHPNIDLEGNVCLNILREDWKPVLNINTVIYGLFHLFTEPNSEDPLNHDAAAVLRDNPKLFETNVRRAMTGGYVGQTFFPRCI.

A UBC core domain is found at 30–175; sequence AGELRLHKDI…VRRAMTGGYV (146 aa). Cys-113 acts as the Glycyl thioester intermediate in catalysis.

It belongs to the ubiquitin-conjugating enzyme family. UBC12 subfamily. In terms of assembly, interacts with RBX1. As to expression, expressed in shoot, root and floral meristems, and in vascular tissues of leaves.

It functions in the pathway protein modification; protein neddylation. Its function is as follows. Accepts the ubiquitin-like protein NEDD8/RUB1 from the ECR1-AXR1 E1 complex and catalyzes its covalent attachment to other proteins. This Arabidopsis thaliana (Mouse-ear cress) protein is NEDD8-conjugating enzyme Ubc12 (RCE1).